A 2150-amino-acid chain; its full sequence is Zinc finger protein sdc-3 (2150 aa).

A dosage compensation domain 1 region spans residues 443-987 (QEITSPMFAL…DQVENEEPER (545 aa)). 4 disordered regions span residues 874–894 (EKEW…EEED), 1261–1373 (GSVV…GPEV), 1411–1448 (FETS…GPIN), and 1491–1670 (EVLQ…SEKL). Positions 1267–1293 (TNQQEENVTSEGPTLQEGSSIPSSSHI) are enriched in polar residues. Over residues 1321-1333 (KKSGKTTRGRPKK) the composition is skewed to basic residues. Over residues 1347–1357 (GQKEEAAHEPE) the composition is skewed to basic and acidic residues. Residues 1504–1524 (SSKKRGRRRKKTPPHIAKARK) show a composition bias toward basic residues. Positions 1508–1516 (RGRRRKKTP) are sex determination domain. The span at 1585 to 1598 (EDLHETERPGHVGE) shows a compositional bias: basic and acidic residues. Residues 1638 to 1648 (IQSQAGTNASP) show a composition bias toward polar residues. 2 C2H2-type zinc fingers span residues 2078 to 2105 (HKCV…GKLH) and 2117 to 2141 (DDCQ…NHHH). Residues 2080–2105 (CVQCSIRNQSVYFSSYSLLELHGKLH) are dosage compensation domain 2.

Component of the SDC complex, which consists of sdc-1, sdc-2 and sdc-3. Within the complex, interacts with sdc-1 and sdc-2. Interacts with dpy-21. Sumoylated. Sumoylation is important for assembly of the dosage compensation complex and its robust binding to the X chromosome. Expressed in somatic and in germline tissues in hermaphrodites (XX). In males (XO), only present in embryos younger than the 100-cell stage (at protein level).

The protein resides in the chromosome. Its subcellular location is the nucleus. Its function is as follows. Component of the SDC complex that functions in sex determination and in X chromosome dosage compensation specifically in hermaphrodite (XX) animals. Plays a central role in the recruitment of the condensin I-like dosage compensation complex to the male sex-determining autosomal gene her-1, thereby contributing to its repression and initiating hermaphrodite sexual development. Involved in the recruitment and assembly of the dosage compensation complex and the dosage compensation protein dpy-21 onto the X chromosomes in hermaphrodites, which leads to a reduction of X-linked gene transcription and an equalization of X-linked gene expression between the sexes. The sequence is that of Zinc finger protein sdc-3 (sdc-3) from Caenorhabditis elegans.